The sequence spans 224 residues: Ribonuclease T (224 aa).

The region spanning Val32 to Phe206 is the Exonuclease domain. Mg(2+)-binding residues include Asp35, Glu37, His193, and Asp198. His193 acts as the Proton donor/acceptor in catalysis.

It belongs to the RNase T family. Homodimer. Mg(2+) is required as a cofactor.

Functionally, trims short 3' overhangs of a variety of RNA species, leaving a one or two nucleotide 3' overhang. Responsible for the end-turnover of tRNA: specifically removes the terminal AMP residue from uncharged tRNA (tRNA-C-C-A). Also appears to be involved in tRNA biosynthesis. In Pseudomonas aeruginosa (strain UCBPP-PA14), this protein is Ribonuclease T.